We begin with the raw amino-acid sequence, 231 residues long: RING finger protein 141 (231 aa).

Glycine 2 carries the N-myristoyl glycine lipid modification. The segment at 156–193 (CCICMDGRADLILPCAHSFCQKCIDKWSDRHRNCPICR) adopts an RING-type zinc-finger fold.

Its subcellular location is the membrane. Functionally, may be involved in spermatogenesis. The polypeptide is RING finger protein 141 (RNF141) (Canis lupus familiaris (Dog)).